Consider the following 76-residue polypeptide: uncharacterized protein (76 aa).

This is an uncharacterized protein from Acidianus bottle-shaped virus (isolate Italy/Pozzuoli) (ABV).